We begin with the raw amino-acid sequence, 235 residues long: Large ribosomal subunit protein uL1 (235 aa).

It belongs to the universal ribosomal protein uL1 family. As to quaternary structure, part of the 50S ribosomal subunit.

Binds directly to 23S rRNA. The L1 stalk is quite mobile in the ribosome, and is involved in E site tRNA release. In terms of biological role, protein L1 is also a translational repressor protein, it controls the translation of the L11 operon by binding to its mRNA. The protein is Large ribosomal subunit protein uL1 of Solidesulfovibrio magneticus (strain ATCC 700980 / DSM 13731 / RS-1) (Desulfovibrio magneticus).